Reading from the N-terminus, the 412-residue chain is Multifunctional CCA protein (412 aa).

Positions 8 and 11 each coordinate ATP. CTP is bound by residues Gly-8 and Arg-11. Mg(2+) contacts are provided by Asp-21 and Asp-23. ATP-binding residues include Arg-91, Arg-137, and Arg-140. Residues Arg-91, Arg-137, and Arg-140 each contribute to the CTP site. Residues 228-329 (TGIHTLMTLS…VKLFDSIDAW (102 aa)) form the HD domain.

It belongs to the tRNA nucleotidyltransferase/poly(A) polymerase family. Bacterial CCA-adding enzyme type 1 subfamily. In terms of assembly, monomer. Can also form homodimers and oligomers. Mg(2+) serves as cofactor. Ni(2+) is required as a cofactor.

The catalysed reaction is a tRNA precursor + 2 CTP + ATP = a tRNA with a 3' CCA end + 3 diphosphate. It carries out the reaction a tRNA with a 3' CCA end + 2 CTP + ATP = a tRNA with a 3' CCACCA end + 3 diphosphate. Its function is as follows. Catalyzes the addition and repair of the essential 3'-terminal CCA sequence in tRNAs without using a nucleic acid template. Adds these three nucleotides in the order of C, C, and A to the tRNA nucleotide-73, using CTP and ATP as substrates and producing inorganic pyrophosphate. tRNA 3'-terminal CCA addition is required both for tRNA processing and repair. Also involved in tRNA surveillance by mediating tandem CCA addition to generate a CCACCA at the 3' terminus of unstable tRNAs. While stable tRNAs receive only 3'-terminal CCA, unstable tRNAs are marked with CCACCA and rapidly degraded. This Shigella dysenteriae serotype 1 (strain Sd197) protein is Multifunctional CCA protein.